Here is a 469-residue protein sequence, read N- to C-terminus: Argininosuccinate lyase (469 aa).

This sequence belongs to the lyase 1 family. Argininosuccinate lyase subfamily.

The protein resides in the cytoplasm. The catalysed reaction is 2-(N(omega)-L-arginino)succinate = fumarate + L-arginine. It functions in the pathway amino-acid biosynthesis; L-arginine biosynthesis; L-arginine from L-ornithine and carbamoyl phosphate: step 3/3. The sequence is that of Argininosuccinate lyase from Polaromonas naphthalenivorans (strain CJ2).